We begin with the raw amino-acid sequence, 250 residues long: Gamma-secretase subunit APH1-like (250 aa).

The next 7 membrane-spanning stretches (helical) occupy residues 5-25 (AGIGYALVALGPSLSLFVSVI), 29-49 (PFLILTVLSSTLLWLVSLIIL), 57-77 (LPLKANVWWPYALLVITSVCF), 116-136 (IALAGGLGHGVAHAVFFCLSL), 157-177 (FLISAIIALAFVTIHTFSMVI), 191-211 (IIVPVIHLTAGMLTLVNFASE), and 212-232 (GCVIGVPLLYLVASLTLVHCG).

It belongs to the APH-1 family. As to quaternary structure, probable component of the gamma-secretase complex, a complex composed of a presenilin homodimer, nicastrin, APH1 and PEN2.

The protein localises to the membrane. In terms of biological role, probable subunit of the gamma-secretase complex, an endoprotease complex that catalyzes the intramembrane cleavage of integral proteins such as Notch receptors. The protein is Gamma-secretase subunit APH1-like of Arabidopsis thaliana (Mouse-ear cress).